We begin with the raw amino-acid sequence, 148 residues long: D-aminoacyl-tRNA deacylase (148 aa).

Positions 137 to 138 (GP) match the Gly-cisPro motif, important for rejection of L-amino acids motif.

Belongs to the DTD family. Homodimer.

The protein localises to the cytoplasm. The enzyme catalyses glycyl-tRNA(Ala) + H2O = tRNA(Ala) + glycine + H(+). It catalyses the reaction a D-aminoacyl-tRNA + H2O = a tRNA + a D-alpha-amino acid + H(+). An aminoacyl-tRNA editing enzyme that deacylates mischarged D-aminoacyl-tRNAs. Also deacylates mischarged glycyl-tRNA(Ala), protecting cells against glycine mischarging by AlaRS. Acts via tRNA-based rather than protein-based catalysis; rejects L-amino acids rather than detecting D-amino acids in the active site. By recycling D-aminoacyl-tRNA to D-amino acids and free tRNA molecules, this enzyme counteracts the toxicity associated with the formation of D-aminoacyl-tRNA entities in vivo and helps enforce protein L-homochirality. The sequence is that of D-aminoacyl-tRNA deacylase from Finegoldia magna (strain ATCC 29328 / DSM 20472 / WAL 2508) (Peptostreptococcus magnus).